The sequence spans 307 residues: NAD kinase (307 aa).

Residue D80 is the Proton acceptor of the active site. Residues 80–81, H85, 154–155, H165, H182, D184, 195–200, and Q254 each bind NAD(+); these read DG, ND, and TAYALS.

This sequence belongs to the NAD kinase family. A divalent metal cation serves as cofactor.

The protein localises to the cytoplasm. The enzyme catalyses NAD(+) + ATP = ADP + NADP(+) + H(+). Its function is as follows. Involved in the regulation of the intracellular balance of NAD and NADP, and is a key enzyme in the biosynthesis of NADP. Catalyzes specifically the phosphorylation on 2'-hydroxyl of the adenosine moiety of NAD to yield NADP. This Acinetobacter baylyi (strain ATCC 33305 / BD413 / ADP1) protein is NAD kinase.